Reading from the N-terminus, the 81-residue chain is Putative defensin-like protein 26 (81 aa).

The first 21 residues, 1 to 21 (MASLKVFSFALLIVLTFSVIG), serve as a signal peptide directing secretion. Disulfide bonds link Cys-33/Cys-81 and Cys-52/Cys-77.

The protein belongs to the DEFL family.

Its subcellular location is the secreted. The polypeptide is Putative defensin-like protein 26 (Arabidopsis thaliana (Mouse-ear cress)).